A 91-amino-acid chain; its full sequence is Sec-independent protein translocase protein TatA (91 aa).

The helical transmembrane segment at 1–21 (MGIFDWKHWIVILIVVVLVFG) threads the bilayer. The tract at residues 41 to 91 (KAMNDDDKPAEQPAPQPQQAQPAPQGSPLNQPHTIDAQAHKVDEPIRKDQV) is disordered. Low complexity predominate over residues 51–64 (EQPAPQPQQAQPAP). Over residues 78-91 (QAHKVDEPIRKDQV) the composition is skewed to basic and acidic residues.

Belongs to the TatA/E family. As to quaternary structure, the Tat system comprises two distinct complexes: a TatABC complex, containing multiple copies of TatA, TatB and TatC subunits, and a separate TatA complex, containing only TatA subunits. Substrates initially bind to the TatABC complex, which probably triggers association of the separate TatA complex to form the active translocon.

It localises to the cell inner membrane. Functionally, part of the twin-arginine translocation (Tat) system that transports large folded proteins containing a characteristic twin-arginine motif in their signal peptide across membranes. TatA could form the protein-conducting channel of the Tat system. This chain is Sec-independent protein translocase protein TatA, found in Pseudomonas syringae pv. syringae (strain B728a).